Here is a 333-residue protein sequence, read N- to C-terminus: MTKVESTSGEVSEWADLNKDILELIFNKLDVMDITMGASRVCISWFLASHNKTLWNTVDLTNLQELDVSRIFNFKDKERPIFFYKHPVDHKHGLTNLLTKIISRFFLDFFEVEGSISLMNLLVEISKLSRMAPKNLFFNFNSYIQENGLKFAAEKMPNIEKLALPIWCYQNEKSLRFAFSQWKNLKTLIIAHEHSFSGRFDFKAVGESCSNLTNLKYLGRLEEYTSREIVSYLHSLKRLSLRCFLVSSIAVYRFITGLPNLTILNVSHCKNPYDYFLPIAKSIDNYVITAATQKLEKFITCPHDCMICKDRCRYSLSYLAEVWRNDEIKELEF.

An F-box domain is found at 11–58 (VSEWADLNKDILELIFNKLDVMDITMGASRVCISWFLASHNKTLWNTV).

The chain is Putative F-box protein At4g11580 from Arabidopsis thaliana (Mouse-ear cress).